The primary structure comprises 254 residues: Triosephosphate isomerase (254 aa).

Position 12–14 (12–14 (NWK)) interacts with substrate. Catalysis depends on His-99, which acts as the Electrophile. The active-site Proton acceptor is the Glu-169. Residues Gly-175, Ser-214, and 235-236 (GG) each bind substrate.

The protein belongs to the triosephosphate isomerase family. Homodimer.

The protein resides in the cytoplasm. It catalyses the reaction D-glyceraldehyde 3-phosphate = dihydroxyacetone phosphate. Its pathway is carbohydrate biosynthesis; gluconeogenesis. The protein operates within carbohydrate degradation; glycolysis; D-glyceraldehyde 3-phosphate from glycerone phosphate: step 1/1. Its function is as follows. Involved in the gluconeogenesis. Catalyzes stereospecifically the conversion of dihydroxyacetone phosphate (DHAP) to D-glyceraldehyde-3-phosphate (G3P). The chain is Triosephosphate isomerase from Bartonella tribocorum (strain CIP 105476 / IBS 506).